Consider the following 840-residue polypeptide: Leucine--tRNA ligase (840 aa).

The 'HIGH' region signature appears at 44-55 (PYPSANGLHVGH). The 'KMSKS' region motif lies at 617–621 (KMSKS). K620 serves as a coordination point for ATP.

It belongs to the class-I aminoacyl-tRNA synthetase family.

Its subcellular location is the cytoplasm. The catalysed reaction is tRNA(Leu) + L-leucine + ATP = L-leucyl-tRNA(Leu) + AMP + diphosphate. This chain is Leucine--tRNA ligase, found in Borreliella burgdorferi (strain ZS7) (Borrelia burgdorferi).